The primary structure comprises 69 residues: Snake venom metalloproteinase BnP2 (69 aa).

In terms of domain architecture, Peptidase M12B spans 1 to 69 (YIELAVVADH…EWRERDIIPR (69 aa)). A Ca(2+)-binding site is contributed by E3.

This sequence belongs to the venom metalloproteinase (M12B) family. P-I subfamily. Monomer. Requires Zn(2+) as cofactor. As to expression, expressed by the venom gland.

The protein resides in the secreted. Inhibited by EDTA. Its function is as follows. This protein is a zinc protease from snake venom that is devoid of significant myotoxic and hemorrhagic activities. It hydrolyzes the Aalpha-chain and more slowly the Bbeta-chain of fibrin and fibrinogen, without affecting the gamma-chains. It induces cell detachment and a apoptosis (anoikis) in endothelial cells. This Bothrops pauloensis (Neuwied's lancehead) protein is Snake venom metalloproteinase BnP2.